The chain runs to 358 residues: Cyclin-dependent kinase 10 (358 aa).

A Protein kinase domain is found at 37-321 (FEKLNRIGEG…AGDCLESSYF (285 aa)). Residues 43–51 (IGEGTYGIV) and Lys66 each bind ATP. The active-site Proton acceptor is the Asp161. The residue at position 194 (Thr194) is a Phosphothreonine. The disordered stretch occupies residues 332–358 (LMPTFPHHRNKRAAPAATEGQSKRCRP).

It belongs to the protein kinase superfamily. CMGC Ser/Thr protein kinase family. CDC2/CDKX subfamily. Heterodimer with CCNQ, the interaction is required for kinase activity. Interacts with ETS2. Interacts with PRK2.

Its subcellular location is the cytoplasm. It is found in the cytoskeleton. It localises to the cilium basal body. It carries out the reaction L-seryl-[protein] + ATP = O-phospho-L-seryl-[protein] + ADP + H(+). The enzyme catalyses L-threonyl-[protein] + ATP = O-phospho-L-threonyl-[protein] + ADP + H(+). Cyclin-dependent kinase that phosphorylates the transcription factor ETS2 (in vitro) and positively controls its proteasomal degradation (in cells). Involved in the regulation of actin cytoskeleton organization through the phosphorylation of actin dynamics regulators such as PKN2. Is a negative regulator of ciliogenesis through phosphorylation of PKN2 and promotion of RhoA signaling. This Rattus norvegicus (Rat) protein is Cyclin-dependent kinase 10 (Cdk10).